Reading from the N-terminus, the 103-residue chain is Histone H4 (103 aa).

Gly residues predominate over residues Met1–Gly14. Positions Met1 to Arg20 are disordered. 2 positions are modified to N6-acetyl-N6-methyllysine; alternate: Lys6 and Lys13. A DNA-binding region spans residues Lys17–Lys21.

Belongs to the histone H4 family. In terms of assembly, the nucleosome is a histone octamer containing two molecules each of H2A, H2B, H3 and H4 assembled in one H3-H4 heterotetramer and two H2A-H2B heterodimers. The octamer wraps approximately 147 bp of DNA.

Its subcellular location is the nucleus. It localises to the chromosome. Core component of nucleosome. Nucleosomes wrap and compact DNA into chromatin, limiting DNA accessibility to the cellular machineries which require DNA as a template. Histones thereby play a central role in transcription regulation, DNA repair, DNA replication and chromosomal stability. DNA accessibility is regulated via a complex set of post-translational modifications of histones, also called histone code, and nucleosome remodeling. This is Histone H4 from Trichogramma cacaeciae (Moth egg parasite).